Reading from the N-terminus, the 304-residue chain is 15-cis-phytoene synthase (304 aa).

This sequence belongs to the phytoene/squalene synthase family. It depends on ATP as a cofactor. Mn(2+) is required as a cofactor. The cofactor is Mg(2+).

It catalyses the reaction 2 (2E,6E,10E)-geranylgeranyl diphosphate = 15-cis-phytoene + 2 diphosphate. It functions in the pathway carotenoid biosynthesis; astaxanthin biosynthesis. It participates in carotenoid biosynthesis; phytoene biosynthesis. Its function is as follows. Involved in the biosynthesis of carotenoids for the production of astaxanthin. Catalyzes the condensation of two molecules of geranylgeranyl diphosphate (GGPP) to give prephytoene diphosphate (PPPP) and the subsequent rearrangement of the cyclopropylcarbinyl intermediate to yield 15-cis phytoene. The chain is 15-cis-phytoene synthase (crtB) from Paracoccus sp. (strain N81106 / MBIC 01143) (Agrobacterium aurantiacum).